The sequence spans 265 residues: Ribosomal RNA large subunit methyltransferase E (265 aa).

5 residues coordinate S-adenosyl-L-methionine: G83, W85, D106, D122, and D146. K186 (proton acceptor) is an active-site residue. The segment at 230 to 265 (KGREAGPPSGGSERPVDVSKDLSARSDSEGPGDAEG) is disordered. The segment covering 243-257 (RPVDVSKDLSARSDS) has biased composition (basic and acidic residues).

The protein belongs to the class I-like SAM-binding methyltransferase superfamily. RNA methyltransferase RlmE family.

It localises to the cytoplasm. It carries out the reaction uridine(2552) in 23S rRNA + S-adenosyl-L-methionine = 2'-O-methyluridine(2552) in 23S rRNA + S-adenosyl-L-homocysteine + H(+). Its function is as follows. Specifically methylates the uridine in position 2552 of 23S rRNA at the 2'-O position of the ribose in the fully assembled 50S ribosomal subunit. The polypeptide is Ribosomal RNA large subunit methyltransferase E (Mesorhizobium japonicum (strain LMG 29417 / CECT 9101 / MAFF 303099) (Mesorhizobium loti (strain MAFF 303099))).